We begin with the raw amino-acid sequence, 550 residues long: Dihydroxy-acid dehydratase (550 aa).

Mg(2+) is bound at residue Asp78. Cys119 lines the [2Fe-2S] cluster pocket. Positions 120 and 121 each coordinate Mg(2+). Lys121 is modified (N6-carboxylysine). Cys192 is a binding site for [2Fe-2S] cluster. Glu440 serves as a coordination point for Mg(2+). The Proton acceptor role is filled by Ser466.

The protein belongs to the IlvD/Edd family. Homodimer. The cofactor is [2Fe-2S] cluster. It depends on Mg(2+) as a cofactor.

The enzyme catalyses (2R)-2,3-dihydroxy-3-methylbutanoate = 3-methyl-2-oxobutanoate + H2O. The catalysed reaction is (2R,3R)-2,3-dihydroxy-3-methylpentanoate = (S)-3-methyl-2-oxopentanoate + H2O. Its pathway is amino-acid biosynthesis; L-isoleucine biosynthesis; L-isoleucine from 2-oxobutanoate: step 3/4. It functions in the pathway amino-acid biosynthesis; L-valine biosynthesis; L-valine from pyruvate: step 3/4. Its function is as follows. Functions in the biosynthesis of branched-chain amino acids. Catalyzes the dehydration of (2R,3R)-2,3-dihydroxy-3-methylpentanoate (2,3-dihydroxy-3-methylvalerate) into 2-oxo-3-methylpentanoate (2-oxo-3-methylvalerate) and of (2R)-2,3-dihydroxy-3-methylbutanoate (2,3-dihydroxyisovalerate) into 2-oxo-3-methylbutanoate (2-oxoisovalerate), the penultimate precursor to L-isoleucine and L-valine, respectively. The sequence is that of Dihydroxy-acid dehydratase from Thermodesulfovibrio yellowstonii (strain ATCC 51303 / DSM 11347 / YP87).